Reading from the N-terminus, the 396-residue chain is MMRLTVLGATGSIGDSTLDVVRRHPDKYSVFALTANAQADKLAVLCREFRPKMAVLGSAAAADALRDQLGTEAAGIEICSGTKALEEAAAHPDCDAVMAAIVGAAGLRPTLAAVRAGKRVLLANKEALVMSGALFMDAVREHGATVLPIDSEHNAIFQCLPQQVPQFGRGVSRIVLTASGGPFRTRAVDSLADVTPDQACAHPNWVMGRKISVDSATMMNKGLEVIEAYWLFGVPVEHLEVLIHPQSVIHSMVGYDDGSVLAQLGNPDMRTPIAYGLAYPERIEAGVPLLDLVTTGALTFEAPDLRRFPCLALAFDALRAGGTAPAALNAANEVAVEAFLQRRIRFTEIAAVVGDTLARTSIVPADSLDTVFAADAQARQQAERYIATACAQLPAA.

Positions 10, 11, 12, 13, 38, and 124 each coordinate NADPH. Lys125 is a binding site for 1-deoxy-D-xylulose 5-phosphate. Glu126 contributes to the NADPH binding site. Residue Asp150 coordinates Mn(2+). 1-deoxy-D-xylulose 5-phosphate is bound by residues Ser151, Glu152, Ser179, and His202. A Mn(2+)-binding site is contributed by Glu152. Gly208 contacts NADPH. 1-deoxy-D-xylulose 5-phosphate-binding residues include Ser215, Asn220, Lys221, and Glu224. Glu224 contributes to the Mn(2+) binding site.

The protein belongs to the DXR family. Mg(2+) is required as a cofactor. Requires Mn(2+) as cofactor.

The enzyme catalyses 2-C-methyl-D-erythritol 4-phosphate + NADP(+) = 1-deoxy-D-xylulose 5-phosphate + NADPH + H(+). It functions in the pathway isoprenoid biosynthesis; isopentenyl diphosphate biosynthesis via DXP pathway; isopentenyl diphosphate from 1-deoxy-D-xylulose 5-phosphate: step 1/6. Functionally, catalyzes the NADPH-dependent rearrangement and reduction of 1-deoxy-D-xylulose-5-phosphate (DXP) to 2-C-methyl-D-erythritol 4-phosphate (MEP). This chain is 1-deoxy-D-xylulose 5-phosphate reductoisomerase, found in Ralstonia pickettii (strain 12J).